The primary structure comprises 431 residues: MVSLEKNDHLMLARQLPLKSVALILAGGRGTRLKDLTNKRAKPAVHFGGKFRIIDFALSNCINSGIRRMGVITQYQSHTLVQHIQRGWSFFNEEMNEFVDLLPAQQRMKGENWYRGTADAVTQNLDIIRRYKAEYVVILAGDHIYKQDYSRMLIDHVEKGARCTVACMPVPIEEASAFGVMAVDENDKIIEFVEKPANPPSMPNDPSKSLASMGIYVFDADYLYELLEEDDRDKNSSHDFGKDLIPKITEAGLAYAHPFPLSCVQSDPDAEPYWRDVGTLEAYWKANLDLASVVPELDMYDRNWPIRTYNESLPPAKFVQDRSGSHGMTLNSLVSGGCVISGSVVVQSVLFSRVRVNSFCNIDSAVLLPEVWVGRSCRLRRCVIDRACVIPEGMVIGENAEEDARRFYRSEEGIVLVTREMLRKLGHKQER.

Lys-39 lines the beta-D-fructose 1,6-bisphosphate pocket. AMP contacts are provided by Arg-40, His-46, and Arg-52. An alpha-D-glucose 1-phosphate-binding site is contributed by Tyr-114. Residue Arg-130 coordinates AMP. Alpha-D-glucose 1-phosphate contacts are provided by residues Gly-179, 194-195 (EK), and Ser-212. Residues Glu-370 and Arg-386 each contribute to the AMP site. Beta-D-fructose 1,6-bisphosphate-binding positions include 419–423 (REMLR) and 429–431 (QER).

The protein belongs to the bacterial/plant glucose-1-phosphate adenylyltransferase family. In terms of assembly, homotetramer.

It carries out the reaction alpha-D-glucose 1-phosphate + ATP + H(+) = ADP-alpha-D-glucose + diphosphate. The protein operates within glycan biosynthesis; glycogen biosynthesis. Allosterically activated by fructose-1,6-bisphosphate (F16BP) and inhibited by AMP. Functionally, involved in the biosynthesis of ADP-glucose, a building block required for the elongation reactions to produce glycogen. Catalyzes the reaction between ATP and alpha-D-glucose 1-phosphate (G1P) to produce pyrophosphate and ADP-Glc. This Escherichia coli O7:K1 (strain IAI39 / ExPEC) protein is Glucose-1-phosphate adenylyltransferase.